The chain runs to 314 residues: Methionyl-tRNA formyltransferase (314 aa).

110 to 113 serves as a coordination point for (6S)-5,6,7,8-tetrahydrofolate; sequence SLLP.

This sequence belongs to the Fmt family.

It carries out the reaction L-methionyl-tRNA(fMet) + (6R)-10-formyltetrahydrofolate = N-formyl-L-methionyl-tRNA(fMet) + (6S)-5,6,7,8-tetrahydrofolate + H(+). Its function is as follows. Attaches a formyl group to the free amino group of methionyl-tRNA(fMet). The formyl group appears to play a dual role in the initiator identity of N-formylmethionyl-tRNA by promoting its recognition by IF2 and preventing the misappropriation of this tRNA by the elongation apparatus. This chain is Methionyl-tRNA formyltransferase, found in Bacillus thuringiensis subsp. konkukian (strain 97-27).